Reading from the N-terminus, the 153-residue chain is Ubiquitin-conjugating enzyme E2 ubc-18 (153 aa).

The UBC core domain maps to 2 to 149 (SATRRLQKEL…AEEHTRKHAE (148 aa)). The active-site Glycyl thioester intermediate is C86.

The protein belongs to the ubiquitin-conjugating enzyme family. As to quaternary structure, interacts with E3 ubiquitin-protein ligase wwp-1. Interacts with RBR-type E3 ubiquitin transferase ari-1.1. As to expression, expressed in neurons localized in the head and tail of adults.

The catalysed reaction is S-ubiquitinyl-[E1 ubiquitin-activating enzyme]-L-cysteine + [E2 ubiquitin-conjugating enzyme]-L-cysteine = [E1 ubiquitin-activating enzyme]-L-cysteine + S-ubiquitinyl-[E2 ubiquitin-conjugating enzyme]-L-cysteine.. Ubiquitin-conjugating enzyme E2. Accepts ubiquitin from the E1 complex and catalyzes its covalent attachment to other proteins. Required for diet restriction-mediated lifespan extension, probably acting as part of a complex with ubiquitin-protein ligase wwp-1. Acts redundantly with lin-35/Rb in the regulation of pharyngeal morphogenesis during embryonic development by negatively regulating the expression of proteins such as sup-35. This chain is Ubiquitin-conjugating enzyme E2 ubc-18, found in Caenorhabditis elegans.